Here is a 475-residue protein sequence, read N- to C-terminus: MSIVYVAGFVDVVAYPKVDPVLYLNLDDVSKCLPLTKPIPLNIEHLPESTIGHTIGLYAVTHGVFCVGVIHSEKFLHLTENLFSNSCVAQATSKFLPYQPLLEMLHTWLPALSLSSLCPTAQNAANTNMFQHVSLCALGRRRGTVAVYSMNLEDAISQFCSISQAEVENIYQDSKNVDINSLPKPVFNIDPHILMAKAIDAGFIKDRLQLLKTDKGVAKIKKLTYLKASEIGKPVTEDISEDMNQHGIVPQGSDDLISVPKSTFLSMLQNNLDNFKQHPRPACFPQYFSPQGAYMPYELYPPQPYSGDNIGYMLPSGSYVPAMFPSRPNKRKREDFDDCVFPGESSLYKDVLNLTKNISQLQDDLKDLKQAAINQPNRYPPHHFSNPYSLDPGHASYFRYAPYGAPKPDQHLLQPLACVQQAPVVQPNYAPPPTEGASNEAPKPSVQEPVHIDASFAQDPVSKLQKMFCDELLNK.

Catalysis depends on charge relay system residues histidine 45, serine 113, and histidine 132. The interaction with pAP stretch occupies residues 254–273 (DDLISVPKSTFLSMLQNNLD). The short motif at 327 to 333 (RPNKRKR) is the Nuclear localization signal element. Positions 426–454 (QPNYAPPPTEGASNEAPKPSVQEPVHIDA) are disordered. Positions 455–475 (SFAQDPVSKLQKMFCDELLNK) are interaction with major capsid protein.

This sequence belongs to the herpesviridae capsid scaffolding protein family. Homomultimer. Interacts with major capsid protein. In terms of assembly, exists in a monomer-dimer equilibrium with the dimer being the active species. In terms of processing, capsid scaffolding protein is cleaved by assemblin after formation of the spherical procapsid. As a result, the capsid obtains its mature, icosahedral shape. Cleavages occur at two or more sites: release (R-site) and maturation (M-site).

The protein localises to the host cytoplasm. The protein resides in the host nucleus. The enzyme catalyses Cleaves -Ala-|-Ser- and -Ala-|-Ala- bonds in the scaffold protein.. Its function is as follows. Acts as a scaffold protein by binding major capsid protein in the cytoplasm, inducing the nuclear localization of both proteins. Multimerizes in the nucleus such as major capsid protein forms the icosahedral T=16 capsid. Autocatalytic cleavage releases the assembly protein, and subsequently abolishes interaction with major capsid protein. Cleavages products are evicted from the capsid before or during DNA packaging. In terms of biological role, protease that plays an essential role in virion assembly within the nucleus. Catalyzes the cleavage of the assembly protein after formation of the spherical procapsid. By that cleavage, the capsid matures and gains its icosahedral shape. The cleavage sites seem to include -Ala-Ser-, -Ala-Ala-, as well as Ala-Thr bonds. Assemblin and cleavages products are evicted from the capsid before or during DNA packaging. Plays a major role in capsid assembly. Acts as a scaffold protein by binding major capsid protein. Multimerizes in the nucleus such as major capsid protein forms the icosahedral T=16 capsid. Cleaved by assemblin after capsid completion. The cleavages products are evicted from the capsid before or during DNA packaging. In Saimiriine herpesvirus 2 (strain 11) (SaHV-2), this protein is Capsid scaffolding protein (17).